The primary structure comprises 142 residues: Large ribosomal subunit protein uL13 (142 aa).

This sequence belongs to the universal ribosomal protein uL13 family. Part of the 50S ribosomal subunit.

In terms of biological role, this protein is one of the early assembly proteins of the 50S ribosomal subunit, although it is not seen to bind rRNA by itself. It is important during the early stages of 50S assembly. The sequence is that of Large ribosomal subunit protein uL13 from Burkholderia pseudomallei (strain 1106a).